The chain runs to 206 residues: Large ribosomal subunit protein eL13z (206 aa).

Residues 183 to 206 (ERTNKRHAGARAKRAADAEKEEKK) form a disordered region. The span at 186–195 (NKRHAGARAK) shows a compositional bias: basic residues. Over residues 196-206 (RAADAEKEEKK) the composition is skewed to basic and acidic residues.

This sequence belongs to the eukaryotic ribosomal protein eL13 family.

This Brassica napus (Rape) protein is Large ribosomal subunit protein eL13z.